We begin with the raw amino-acid sequence, 200 residues long: Endoribonuclease YbeY (200 aa).

Over residues Met-1–Pro-18 the composition is skewed to pro residues. The tract at residues Met-1–Asp-22 is disordered. His-151, His-155, and His-161 together coordinate Zn(2+).

It belongs to the endoribonuclease YbeY family. It depends on Zn(2+) as a cofactor.

It is found in the cytoplasm. In terms of biological role, single strand-specific metallo-endoribonuclease involved in late-stage 70S ribosome quality control and in maturation of the 3' terminus of the 16S rRNA. This Rhodospirillum rubrum (strain ATCC 11170 / ATH 1.1.1 / DSM 467 / LMG 4362 / NCIMB 8255 / S1) protein is Endoribonuclease YbeY.